We begin with the raw amino-acid sequence, 993 residues long: Vacuolar membrane protease (993 aa).

Residues 1 to 24 lie on the Cytoplasmic side of the membrane; the sequence is MSPAMANPRVRKFNPIAFTPLPVT. Residues 25–45 traverse the membrane as a helical segment; it reads LITTIVYLAVLILVLVTYLVV. Residues 46-391 lie on the Vacuolar side of the membrane; it reads PPAPTLEMSP…SAFAVFRLHT (346 aa). N-linked (GlcNAc...) asparagine glycosylation is found at asparagine 59, asparagine 116, and asparagine 119. Zn(2+)-binding residues include histidine 175 and aspartate 187. Glutamate 221 acts as the Proton acceptor in catalysis. A Zn(2+)-binding site is contributed by glutamate 222. N-linked (GlcNAc...) asparagine glycosylation occurs at asparagine 238. Residues glutamate 247 and histidine 320 each contribute to the Zn(2+) site. Residues 392-412 form a helical membrane-spanning segment; sequence LFALSVTLLVSAPLVLFITSI. The Cytoplasmic portion of the chain corresponds to 413-447; the sequence is ALSKTDRMYLFSMSKSLGGTSETVSLRGLRGLFRT. Residues 448-468 form a helical membrane-spanning segment; the sequence is PIILTVTTVITIGLAYLLEKI. Residues 469–475 lie on the Vacuolar side of the membrane; it reads NPYIVHS. Residues 476–496 form a helical membrane-spanning segment; it reads SQFAVWSMMLSVWIFVAWFLA. Residues 497-509 are Cytoplasmic-facing; sequence RVADFFRPSALHR. A helical membrane pass occupies residues 510-530; the sequence is AYSYTWIFIATWIMLVISTVY. Topologically, residues 531-534 are vacuolar; sequence ANQK. A helical transmembrane segment spans residues 535-555; that stretch reads GIAAGYFIFFYFAAVFLATWV. Topologically, residues 556 to 672 are cytoplasmic; sequence SYLELFSLPR…WSWTLPRWTW (117 aa). A disordered region spans residues 579–621; that stretch reads RRSSSLSSRLLTPSADELPSDIGPNGAENLGDPDETDPTESTS. A helical membrane pass occupies residues 673–693; that stretch reads ILQLLLLAPIVIILVGQVGLL. Residues 694 to 709 lie on the Vacuolar side of the membrane; the sequence is LTTAMSQIGSDGVSTF. A helical transmembrane segment spans residues 710-730; sequence IVYLACALLSTLLFAPLFPFI. Topologically, residues 731–737 are cytoplasmic; the sequence is HRFTYHV. The helical transmembrane segment at 738-758 threads the bilayer; sequence PTFLLLIFIGTLIYNLVAFPF. At 759–993 the chain is on the vacuolar side; it reads SPANRLKIFF…VEASHDFIIQ (235 aa). N-linked (GlcNAc...) asparagine glycans are attached at residues asparagine 806, asparagine 847, and asparagine 955.

The protein belongs to the peptidase M28 family. The cofactor is Zn(2+).

The protein localises to the vacuole membrane. May be involved in vacuolar sorting and osmoregulation. This Paracoccidioides lutzii (strain ATCC MYA-826 / Pb01) (Paracoccidioides brasiliensis) protein is Vacuolar membrane protease.